The sequence spans 258 residues: Imidazole glycerol phosphate synthase subunit HisF (258 aa).

Catalysis depends on residues aspartate 11 and aspartate 130.

This sequence belongs to the HisA/HisF family. In terms of assembly, heterodimer of HisH and HisF.

Its subcellular location is the cytoplasm. It carries out the reaction 5-[(5-phospho-1-deoxy-D-ribulos-1-ylimino)methylamino]-1-(5-phospho-beta-D-ribosyl)imidazole-4-carboxamide + L-glutamine = D-erythro-1-(imidazol-4-yl)glycerol 3-phosphate + 5-amino-1-(5-phospho-beta-D-ribosyl)imidazole-4-carboxamide + L-glutamate + H(+). The protein operates within amino-acid biosynthesis; L-histidine biosynthesis; L-histidine from 5-phospho-alpha-D-ribose 1-diphosphate: step 5/9. In terms of biological role, IGPS catalyzes the conversion of PRFAR and glutamine to IGP, AICAR and glutamate. The HisF subunit catalyzes the cyclization activity that produces IGP and AICAR from PRFAR using the ammonia provided by the HisH subunit. This chain is Imidazole glycerol phosphate synthase subunit HisF, found in Gluconacetobacter diazotrophicus (strain ATCC 49037 / DSM 5601 / CCUG 37298 / CIP 103539 / LMG 7603 / PAl5).